A 280-amino-acid chain; its full sequence is Lipase chaperone (280 aa).

Residues 5–22 (ALTIITIASGSLGAVYFL) traverse the membrane as a helical segment.

The protein belongs to the lipase chaperone family.

Its subcellular location is the cell inner membrane. In terms of biological role, may be involved in the folding of the extracellular lipase during its passage through the periplasm. This Vibrio vulnificus (strain YJ016) protein is Lipase chaperone (lifO).